The sequence spans 377 residues: Glutamate 5-kinase (377 aa).

Residue lysine 15 coordinates ATP. Substrate-binding residues include serine 56, aspartate 143, and asparagine 155. 175–176 serves as a coordination point for ATP; that stretch reads SD. The 78-residue stretch at 281-358 folds into the PUA domain; sequence KGTLTIDAGA…PDVLIILGIS (78 aa).

It belongs to the glutamate 5-kinase family.

The protein localises to the cytoplasm. It carries out the reaction L-glutamate + ATP = L-glutamyl 5-phosphate + ADP. The protein operates within amino-acid biosynthesis; L-proline biosynthesis; L-glutamate 5-semialdehyde from L-glutamate: step 1/2. In terms of biological role, catalyzes the transfer of a phosphate group to glutamate to form L-glutamate 5-phosphate. The sequence is that of Glutamate 5-kinase from Rhodopseudomonas palustris (strain BisA53).